Consider the following 337-residue polypeptide: Ornithine carbamoyltransferase (337 aa).

Carbamoyl phosphate contacts are provided by residues 57 to 60 (STRT), Gln-84, Arg-108, and 135 to 138 (HPTQ). Residues Asn-167, Asp-231, and 235–236 (SM) contribute to the L-ornithine site. Carbamoyl phosphate contacts are provided by residues 272-273 (CL) and Arg-317.

The protein belongs to the aspartate/ornithine carbamoyltransferase superfamily. OTCase family.

It is found in the cytoplasm. It carries out the reaction carbamoyl phosphate + L-ornithine = L-citrulline + phosphate + H(+). The protein operates within amino-acid degradation; L-arginine degradation via ADI pathway; carbamoyl phosphate from L-arginine: step 2/2. In terms of biological role, reversibly catalyzes the transfer of the carbamoyl group from carbamoyl phosphate (CP) to the N(epsilon) atom of ornithine (ORN) to produce L-citrulline. The protein is Ornithine carbamoyltransferase of Streptococcus equi subsp. zooepidemicus (strain MGCS10565).